The following is a 415-amino-acid chain: Serine hydroxymethyltransferase (415 aa).

Residues Leu120 and 124–126 (GHL) each bind (6S)-5,6,7,8-tetrahydrofolate. Lys229 is modified (N6-(pyridoxal phosphate)lysine).

Belongs to the SHMT family. As to quaternary structure, homodimer. The cofactor is pyridoxal 5'-phosphate.

The protein resides in the cytoplasm. It carries out the reaction (6R)-5,10-methylene-5,6,7,8-tetrahydrofolate + glycine + H2O = (6S)-5,6,7,8-tetrahydrofolate + L-serine. It functions in the pathway one-carbon metabolism; tetrahydrofolate interconversion. It participates in amino-acid biosynthesis; glycine biosynthesis; glycine from L-serine: step 1/1. In terms of biological role, catalyzes the reversible interconversion of serine and glycine with tetrahydrofolate (THF) serving as the one-carbon carrier. This reaction serves as the major source of one-carbon groups required for the biosynthesis of purines, thymidylate, methionine, and other important biomolecules. Also exhibits THF-independent aldolase activity toward beta-hydroxyamino acids, producing glycine and aldehydes, via a retro-aldol mechanism. The chain is Serine hydroxymethyltransferase from Caldicellulosiruptor bescii (strain ATCC BAA-1888 / DSM 6725 / KCTC 15123 / Z-1320) (Anaerocellum thermophilum).